The primary structure comprises 360 residues: Vomilenine reductase (360 aa).

Residues 23–351 (GLLSPFNFSR…KADVKYRFVI (329 aa)) enclose the Enoyl reductase (ER) domain. Cys50 provides a ligand contact to Zn(2+). Ser52 serves as a coordination point for an alcohol. Ser52 is a binding site for NADP(+). Residues Asp53, His72, Glu73, Cys103, Cys106, Cys109, Cys117, and Cys166 each coordinate Zn(2+). Position 72 (His72) interacts with an alcohol. NADP(+) is bound by residues Leu192, Gly194, Leu195, Ser214, Thr215, Ser216, Lys219, Lys220, Val277, Ala279, Ser301, and Arg348.

It belongs to the zinc-containing alcohol dehydrogenase family. Class-P subfamily. Homodimer. It depends on Zn(2+) as a cofactor. In terms of tissue distribution, confined to roots.

It is found in the cytoplasm. It catalyses the reaction (2R)-1,2-dihydrovomilenine + NADP(+) = vomilenine + NADPH + H(+). It participates in alkaloid biosynthesis; ajmaline biosynthesis. Its activity is regulated as follows. Inhibited by EDTA and p-hydroxymercuribenzoate, a sulfhydryl reagent. Functionally, alcohol dehydrogenase involved in the biosynthesis of ajmaline-type monoterpenoid indole alkaloids (MIAs) natural products, important plant-derived pharmaceuticals used in the therapy of heart disorders. Catalyzes the conversion of vomilenine to 1,2-dihydrovomilenine, an intermediate chemical in the biosynthesis of ajmaline. The chain is Vomilenine reductase from Rauvolfia serpentina (Serpentine wood).